The primary structure comprises 76 residues: Conotoxin PnMKLT1-1111 (76 aa).

A signal peptide spans 1-22 (MKLTCMMIVAVLFLTAWTVVTA). Positions 23–50 (VPHSNKRLANLYLKARHEMKNPEASNVD) are excised as a propeptide. 3 disulfide bridges follow: Cys-53–Cys-67, Cys-60–Cys-71, and Cys-66–Cys-75.

This sequence belongs to the conotoxin O1 superfamily. As to expression, expressed by the venom duct.

The protein resides in the secreted. The chain is Conotoxin PnMKLT1-1111 from Conus pennaceus (Feathered cone).